Consider the following 620-residue polypeptide: Schwann cell myelin protein (620 aa).

Positions 1–17 (MELLVLTVLLMGTGCIS) are cleaved as a signal peptide. Topologically, residues 18–516 (APWAAWMPPK…GGLVWAKVGP (499 aa)) are extracellular. The Ig-like V-type domain maps to 28 to 106 (MAALSGTCVQ…RDCTLNIARL (79 aa)). Cystine bridges form between cysteine 35–cysteine 164, cysteine 40–cysteine 99, and cysteine 158–cysteine 216. Arginine 117 is an N-acetylneuraminate binding site. Ig-like C2-type domains follow at residues 151–233 (GSEA…DVGL), 239–322 (PQVV…LRVA), 325–407 (PRAP…FNIS), and 414–495 (VLPA…NRHG). Asparagine 222 is a glycosylation site (N-linked (GlcNAc...) asparagine). A disulfide bond links cysteine 260 and cysteine 304. 2 N-linked (GlcNAc...) asparagine glycosylation sites follow: asparagine 314 and asparagine 331. A disulfide bond links cysteine 346 and cysteine 391. Asparagine 405 carries N-linked (GlcNAc...) asparagine glycosylation. 2 disulfides stabilise this stretch: cysteine 420–cysteine 429 and cysteine 431–cysteine 488. An N-linked (GlcNAc...) asparagine glycan is attached at asparagine 449. The helical transmembrane segment at 517–536 (VGAVVAFAIVIAVVCYLSQS) threads the bilayer. The Cytoplasmic segment spans residues 537–620 (RRKKGAGSPE…PPEYAEIRVK (84 aa)). 2 disordered regions span residues 539-562 (KKGAGSPEVTPVQPMAGPGGDPDL) and 583-620 (VKEGSGAPQEVTPTSHPPMKPTRGPLEDPPEYAEIRVK).

Belongs to the immunoglobulin superfamily. SIGLEC (sialic acid binding Ig-like lectin) family. In terms of tissue distribution, exclusively expressed by myelinating and nonmyelinating Schwann cells and oligodendrocytes.

It localises to the membrane. This Coturnix japonica (Japanese quail) protein is Schwann cell myelin protein (SMP).